Consider the following 320-residue polypeptide: Cytochrome f (320 aa).

Residues methionine 1–alanine 35 form the signal peptide. Residues tyrosine 36, cysteine 56, cysteine 59, and histidine 60 each contribute to the heme site. Residues valine 286–lysine 306 traverse the membrane as a helical segment.

It belongs to the cytochrome f family. The 4 large subunits of the cytochrome b6-f complex are cytochrome b6, subunit IV (17 kDa polypeptide, petD), cytochrome f and the Rieske protein, while the 4 small subunits are PetG, PetL, PetM and PetN. The complex functions as a dimer. Heme is required as a cofactor.

The protein resides in the plastid. The protein localises to the chloroplast thylakoid membrane. Its function is as follows. Component of the cytochrome b6-f complex, which mediates electron transfer between photosystem II (PSII) and photosystem I (PSI), cyclic electron flow around PSI, and state transitions. The protein is Cytochrome f of Pelargonium hortorum (Common geranium).